The following is a 159-amino-acid chain: Major allergen Pyr c 1 (159 aa).

The protein belongs to the BetVI family.

The sequence is that of Major allergen Pyr c 1 (PYRC1) from Pyrus communis (Pear).